Reading from the N-terminus, the 322-residue chain is Nuclease 1, mitochondrial (322 aa).

The active-site Proton acceptor is H142. N174 provides a ligand contact to Mg(2+).

Belongs to the DNA/RNA non-specific endonuclease family. In terms of assembly, homodimer. Mn(2+) serves as cofactor. Mg(2+) is required as a cofactor.

Its subcellular location is the mitochondrion inner membrane. In terms of biological role, this enzyme has both RNase and DNase activity. It degrades single-stranded DNA and RNA. The sequence is that of Nuclease 1, mitochondrial (pnu1) from Schizosaccharomyces pombe (strain 972 / ATCC 24843) (Fission yeast).